We begin with the raw amino-acid sequence, 357 residues long: DNA replication and repair protein RecF (357 aa).

Gly30–Thr37 serves as a coordination point for ATP.

The protein belongs to the RecF family.

It localises to the cytoplasm. Its function is as follows. The RecF protein is involved in DNA metabolism; it is required for DNA replication and normal SOS inducibility. RecF binds preferentially to single-stranded, linear DNA. It also seems to bind ATP. The sequence is that of DNA replication and repair protein RecF from Vibrio campbellii (strain ATCC BAA-1116).